Reading from the N-terminus, the 600-residue chain is Aspartate--tRNA ligase (600 aa).

Glu175 provides a ligand contact to L-aspartate. An aspartate region spans residues 199-202 (QLFK). Arg221 contributes to the L-aspartate binding site. ATP-binding positions include 221-223 (RDE) and Gln230. Residue His448 coordinates L-aspartate. Residue Glu484 participates in ATP binding. An L-aspartate-binding site is contributed by Arg491. 536 to 539 (GLDR) provides a ligand contact to ATP.

The protein belongs to the class-II aminoacyl-tRNA synthetase family. Type 1 subfamily. As to quaternary structure, homodimer.

The protein localises to the cytoplasm. The enzyme catalyses tRNA(Asp) + L-aspartate + ATP = L-aspartyl-tRNA(Asp) + AMP + diphosphate. Its function is as follows. Catalyzes the attachment of L-aspartate to tRNA(Asp) in a two-step reaction: L-aspartate is first activated by ATP to form Asp-AMP and then transferred to the acceptor end of tRNA(Asp). This Limosilactobacillus reuteri (strain DSM 20016) (Lactobacillus reuteri) protein is Aspartate--tRNA ligase.